Reading from the N-terminus, the 218-residue chain is UPF0502 protein Geob_1184 (218 aa).

The protein belongs to the UPF0502 family.

The protein is UPF0502 protein Geob_1184 of Geotalea daltonii (strain DSM 22248 / JCM 15807 / FRC-32) (Geobacter daltonii).